The following is a 1136-amino-acid chain: Carbamoyl phosphate synthase large chain (1136 aa).

Residues 1–402 are carboxyphosphate synthetic domain; it reads MPKRTDIKSV…SLGKAMRSID (402 aa). R129, R169, G175, G176, E208, I210, E215, G241, V242, H243, Q285, and E299 together coordinate ATP. Residues 133–328 enclose the ATP-grasp 1 domain; sequence KKVVKEAGAE…IAKIATKLAL (196 aa). Residues Q285, E299, and N301 each coordinate Mg(2+). Mn(2+)-binding residues include Q285, E299, and N301. The tract at residues 403–551 is oligomerization domain; that stretch reads KRHMGFSWDG…YYYSCYADET (149 aa). Residues 552–962 are carbamoyl phosphate synthetic domain; the sequence is ELRKREREAV…AFAKSQLASY (411 aa). Residues 681–881 form the ATP-grasp 2 domain; it reads GEVLRQEHLN…LAKAAARIMA (201 aa). ATP-binding residues include R717, K765, L767, E772, G797, V798, H799, S800, Q840, and E852. The Mg(2+) site is built by Q840, E852, and N854. Mn(2+)-binding residues include Q840, E852, and N854. An allosteric domain region spans residues 963-1136; that stretch reads EGGLPTNGNV…KEEGEEARAQ (174 aa). The MGS-like domain maps to 964 to 1122; the sequence is GGLPTNGNVF…QEHSRELYEL (159 aa).

It belongs to the CarB family. As to quaternary structure, composed of two chains; the small (or glutamine) chain promotes the hydrolysis of glutamine to ammonia, which is used by the large (or ammonia) chain to synthesize carbamoyl phosphate. Tetramer of heterodimers (alpha,beta)4. The cofactor is Mg(2+). Requires Mn(2+) as cofactor.

The catalysed reaction is hydrogencarbonate + L-glutamine + 2 ATP + H2O = carbamoyl phosphate + L-glutamate + 2 ADP + phosphate + 2 H(+). It catalyses the reaction hydrogencarbonate + NH4(+) + 2 ATP = carbamoyl phosphate + 2 ADP + phosphate + 2 H(+). The protein operates within amino-acid biosynthesis; L-arginine biosynthesis; carbamoyl phosphate from bicarbonate: step 1/1. It participates in pyrimidine metabolism; UMP biosynthesis via de novo pathway; (S)-dihydroorotate from bicarbonate: step 1/3. Functionally, large subunit of the glutamine-dependent carbamoyl phosphate synthetase (CPSase). CPSase catalyzes the formation of carbamoyl phosphate from the ammonia moiety of glutamine, carbonate, and phosphate donated by ATP, constituting the first step of 2 biosynthetic pathways, one leading to arginine and/or urea and the other to pyrimidine nucleotides. The large subunit (synthetase) binds the substrates ammonia (free or transferred from glutamine from the small subunit), hydrogencarbonate and ATP and carries out an ATP-coupled ligase reaction, activating hydrogencarbonate by forming carboxy phosphate which reacts with ammonia to form carbamoyl phosphate. The polypeptide is Carbamoyl phosphate synthase large chain (Bifidobacterium animalis subsp. lactis (strain AD011)).